We begin with the raw amino-acid sequence, 592 residues long: Frizzled-1 (592 aa).

Positions 1-26 are disordered; it reads MAERRGPAGGGSGEVGGGRRAGGDRC. The first 48 residues, 1 to 48, serve as a signal peptide directing secretion; that stretch reads MAERRGPAGGGSGEVGGGRRAGGDRCPRRPPALPLLLLLWAAALPAGG. The span at 7 to 20 shows a compositional bias: gly residues; that stretch reads PAGGGSGEVGGGRR. Topologically, residues 49-271 are extracellular; that stretch reads QPAAQPAALS…PEELRFSRTW (223 aa). In terms of domain architecture, FZ spans 65–184; sequence PDHGYCQPIS…HGAGELCVGQ (120 aa). Intrachain disulfides connect Cys70–Cys131, Cys78–Cys124, Cys115–Cys152, Cys141–Cys181, and Cys145–Cys169. Residue Asn84 is glycosylated (N-linked (GlcNAc...) asparagine). A glycan (N-linked (GlcNAc...) asparagine) is linked at Asn185. Residues 185 to 219 form a disordered region; that stretch reads NASERGTPTPALRPESWTSNPHRGGGAGGSGPGEA. Residues 207–218 are compositionally biased toward gly residues; it reads RGGGAGGSGPGE. The chain crosses the membrane as a helical span at residues 272–292; that stretch reads IGIWSVLCCASTLFTVLTYLV. Topologically, residues 293–303 are cytoplasmic; that stretch reads DMKRFSYPERP. A helical membrane pass occupies residues 304–324; it reads IIFLSGCYTAVAVAYIAGFLL. Residues 325 to 351 lie on the Extracellular side of the membrane; it reads EERVVCNERFAEDGSRTVAQGTKREGC. Residues 352-372 traverse the membrane as a helical segment; that stretch reads TILFMMLYFFGMASSIWWVIL. Residues 373 to 394 lie on the Cytoplasmic side of the membrane; that stretch reads SLTWFLAAGMKWGHEAIEANSQ. A helical membrane pass occupies residues 395–415; the sequence is YFHLAAWAVPAIKTITILALG. Topologically, residues 416-438 are extracellular; that stretch reads QVDGDVLSGVCFVGINNVDALRG. Residues 439 to 459 form a helical membrane-spanning segment; sequence FVLAPLFVYLFIGTSFLLAGF. Over 460-485 the chain is Cytoplasmic; the sequence is VSLFRIRTIMKHDGTKTEKLEKLMVR. A helical membrane pass occupies residues 486–506; the sequence is IGIFSVLYTVPATIVIACYFY. The Extracellular segment spans residues 507-546; that stretch reads EQAFREQWERSWVTQSCKSYAIPCPNNHSSHHPPMSPDFT. Asn533 is a glycosylation site (N-linked (GlcNAc...) asparagine). Residues 547–567 traverse the membrane as a helical segment; sequence VFMIKYLMTLIVGITSGFWIW. The Cytoplasmic portion of the chain corresponds to 568–592; that stretch reads SGKTLNSWRKFYTRLTNSKQGETTV. A Lys-Thr-X-X-X-Trp motif, mediates interaction with the PDZ domain of Dvl family members motif is present at residues 570-575; the sequence is KTLNSW. Residues 590–592 carry the PDZ-binding motif; the sequence is TTV.

It belongs to the G-protein coupled receptor Fz/Smo family. Expressed in the lens, otic placode (medial wall of the vesicle) and in epibranchial placode. Also expressed in the developing somites (dermomyotome).

The protein localises to the cell membrane. In terms of biological role, receptor for Wnt proteins. Functions in the canonical Wnt/beta-catenin signaling pathway. The canonical Wnt/beta-catenin signaling pathway leads to the activation of disheveled proteins, inhibition of GSK-3 kinase, nuclear accumulation of beta-catenin and activation of Wnt target genes. A second signaling pathway involving PKC and calcium fluxes has been seen for some family members, but it is not yet clear if it represents a distinct pathway or if it can be integrated in the canonical pathway, as PKC seems to be required for Wnt-mediated inactivation of GSK-3 kinase. Both pathways seem to involve interactions with G-proteins. May be involved in transduction and intercellular transmission of polarity information during tissue morphogenesis and/or in differentiated tissues. The sequence is that of Frizzled-1 (FZD1) from Gallus gallus (Chicken).